The sequence spans 707 residues: E3 ubiquitin-protein ligase Praja-2 (707 aa).

A compositionally biased stretch (basic and acidic residues) spans 1 to 10 (MSQYTEKEPS). Disordered regions lie at residues 1 to 23 (MSQY…AWPR), 75 to 120 (NTAG…PSVA), and 242 to 290 (AGDA…CVPG). Ser-2 bears the N-acetylserine mark. Polar residues predominate over residues 109-119 (LNQSTESNPSV). The span at 246–276 (EAVHQDGQEFQRSSEDGIVRKRRQDDTDQGR) shows a compositional bias: basic and acidic residues. Residues Ser-306 and Ser-320 each carry the phosphoserine modification. Ser-339 is subject to Phosphoserine; by PKA. Disordered stretches follow at residues 380–403 (VTPR…GRQE) and 424–493 (EDSS…QTSL). A compositionally biased stretch (basic and acidic residues) spans 381-391 (TPREAERHRAT). Ser-430 carries the phosphoserine modification. The span at 465 to 481 (NEPELQSDSSGPEEENQ) shows a compositional bias: acidic residues. Positions 482–491 (ELSLQEGEQT) are enriched in polar residues. Positions 530 to 707 (DGNNNLEDDS…PANDNAEEAP (178 aa)) are interaction with PRKAR1A, PRKAR2A and PRKAR2B. Residues 549-569 (WSLFDGFADGLGVAEAISYVD) are mediates interaction with TBC1D31. The RING-type; atypical zinc-finger motif lies at 633-674 (CPICCSEYIKDDIATELPCHHFFHKPCVSIWLQKSGTCPVCR). The interval 686 to 707 (AAASSEPDLDASPANDNAEEAP) is disordered.

Binds ubiquitin-conjugating enzymes (E2s). In vitro, interacts with the ubiquitin-conjugating enzyme, UBE2D2. The phosphorylated form interacts with PRKAR1A, PRKAR2A and PRKAR2B. Binds the catalytic subunits of cAMP-dependent protein kinase. Interacts with MFHAS1. Interacts with TBC1D31; the interaction is direct and recruits PJA2 to centrosomes. In terms of tissue distribution, highly expressed in the brain, in nerve cells but not in glial cells. Abundantly expressed in pyramidal neurons and in the CA3 region of apical dendrites. Colocalizes with PRKAR2B in dentate granule cells and at postsynaptic sites of primary hippocampal neurons.

It localises to the cytoplasm. The protein resides in the cell membrane. Its subcellular location is the endoplasmic reticulum membrane. The protein localises to the golgi apparatus membrane. It is found in the synapse. It localises to the postsynaptic density. The protein resides in the cytoskeleton. Its subcellular location is the microtubule organizing center. The protein localises to the centrosome. It carries out the reaction S-ubiquitinyl-[E2 ubiquitin-conjugating enzyme]-L-cysteine + [acceptor protein]-L-lysine = [E2 ubiquitin-conjugating enzyme]-L-cysteine + N(6)-ubiquitinyl-[acceptor protein]-L-lysine.. It participates in protein modification; protein ubiquitination. In terms of biological role, has E2-dependent E3 ubiquitin-protein ligase activity. Responsible for ubiquitination of cAMP-dependent protein kinase type I and type II-alpha/beta regulatory subunits and for targeting them for proteasomal degradation. Essential for PKA-mediated long-term memory processes. Through the ubiquitination of MFHAS1, positively regulates the TLR2 signaling pathway that leads to the activation of the downstream p38 and JNK MAP kinases and promotes the polarization of macrophages toward the pro-inflammatory M1 phenotype. Plays a role in ciliogenesis by ubiquitinating OFD1. In Rattus norvegicus (Rat), this protein is E3 ubiquitin-protein ligase Praja-2 (Pja2).